A 432-amino-acid polypeptide reads, in one-letter code: uncharacterized protein (432 aa).

3 disordered regions span residues 37 to 61 (DGIG…SADC), 127 to 151 (RDHD…DTRY), and 298 to 378 (SVSS…NHQC). The segment covering 312–335 (DSSTLANTQGFREDQSQQQHTPSP) has biased composition (polar residues). The segment covering 341–366 (SSLSHQFHQSIHQSHQHHQSIYQSQH) has biased composition (low complexity).

This is an uncharacterized protein from Arabidopsis thaliana (Mouse-ear cress).